A 652-amino-acid chain; its full sequence is Transmembrane 9 superfamily member 12 (652 aa).

The signal sequence occupies residues 1–20 (MFGVYRVFVLLVFVSQLCNG). The Lumenal segment spans residues 21–286 (FYLPGSYMHT…LKMEGARVHW (266 aa)). The helical transmembrane segment at 287–307 (FSILNSLMVIFFLAGIVFVIF) threads the bilayer. Residues 308–362 (LRTVRRDLTKYEELDKEAQAQMNEELSGWKLVVGDVFREPEMSKLLCIMVGDGVR) are Cytoplasmic-facing. Residues 363 to 383 (ITGMAVVTIVFAALGFMSPAS) form a helical membrane-spanning segment. At 384-386 (RGM) the chain is on the lumenal side. A helical membrane pass occupies residues 387 to 407 (LLTGMIILYLFLGIVAGYAGV). Residues 408–426 (RLWRTVKGTSEGWRSLSWS) are Cytoplasmic-facing. Residues 427 to 447 (IACFFPGIAFVILTVLNFLLW) traverse the membrane as a helical segment. Residues 448-460 (SSNSTGAIPISLY) are Lumenal-facing. The chain crosses the membrane as a helical span at residues 461 to 481 (FELLALWFCISVPLTLFGGFL). Residues 482–510 (GTRAEAIQFPVRTNQIPREIPERKYPSWL) are Cytoplasmic-facing. Residues 511-531 (LVLGAGTLPFGTLFIELFFIF) form a helical membrane-spanning segment. Topologically, residues 532 to 541 (SSIWLGRFYY) are lumenal. The chain crosses the membrane as a helical span at residues 542–562 (VFGFLLIVLLLLVVVCAEVSV). The Cytoplasmic portion of the chain corresponds to 563–580 (VLTYMHLCVEDWRWWWKA). Residues 581–601 (FYASGSVALYVFAYSINYLVF) form a helical membrane-spanning segment. At 602–613 (DLQSLSGPVSAM) the chain is on the lumenal side. The helical transmembrane segment at 614–634 (LYIGYSLLMAIAIMLATGTIG) threads the bilayer. Residues 635–652 (FLTSFYFVHYLFSSVKID) are Cytoplasmic-facing. The short motif at 641 to 646 (FVHYLF) is the Endoplasmic reticulum export signal element. Positions 650–652 (KID) match the Golgi retention signal motif.

Belongs to the nonaspanin (TM9SF) (TC 9.A.2) family.

Its subcellular location is the endosome membrane. The protein localises to the golgi apparatus membrane. The protein is Transmembrane 9 superfamily member 12 of Arabidopsis thaliana (Mouse-ear cress).